Reading from the N-terminus, the 519-residue chain is NADH-quinone oxidoreductase subunit C/D (519 aa).

The NADH dehydrogenase I subunit C stretch occupies residues methionine 1–glutamine 138. The tract at residues aspartate 159–arginine 519 is NADH dehydrogenase I subunit D.

It in the N-terminal section; belongs to the complex I 30 kDa subunit family. In the C-terminal section; belongs to the complex I 49 kDa subunit family. NDH-1 is composed of 13 different subunits. Subunits NuoB, CD, E, F, and G constitute the peripheral sector of the complex.

It is found in the cell inner membrane. It carries out the reaction a quinone + NADH + 5 H(+)(in) = a quinol + NAD(+) + 4 H(+)(out). Functionally, NDH-1 shuttles electrons from NADH, via FMN and iron-sulfur (Fe-S) centers, to quinones in the respiratory chain. The immediate electron acceptor for the enzyme in this species is believed to be a menaquinone. Couples the redox reaction to proton translocation (for every two electrons transferred, four hydrogen ions are translocated across the cytoplasmic membrane), and thus conserves the redox energy in a proton gradient. The polypeptide is NADH-quinone oxidoreductase subunit C/D (Phocaeicola vulgatus (strain ATCC 8482 / DSM 1447 / JCM 5826 / CCUG 4940 / NBRC 14291 / NCTC 11154) (Bacteroides vulgatus)).